The following is a 32-amino-acid chain: Cytochrome b6-f complex subunit 7 (32 aa).

Residues 9–27 (AAVFWILIPIGLVGGALLL) traverse the membrane as a helical segment.

It belongs to the PetM family. The 4 large subunits of the cytochrome b6-f complex are cytochrome b6, subunit IV (17 kDa polypeptide, PetD), cytochrome f and the Rieske protein, while the 4 small subunits are PetG, PetL, PetM and PetN. The complex functions as a dimer.

Its subcellular location is the cellular thylakoid membrane. Its function is as follows. Component of the cytochrome b6-f complex, which mediates electron transfer between photosystem II (PSII) and photosystem I (PSI), cyclic electron flow around PSI, and state transitions. This is Cytochrome b6-f complex subunit 7 from Prochlorococcus marinus (strain MIT 9515).